The sequence spans 340 residues: Probable protein phosphatase 2C 21 (340 aa).

The segment at 1 to 21 (MGASPSRPLEQSPSSSEGENH) is disordered. Residues 24-305 (KYASYTTQGF…DNATAILVKF (282 aa)) enclose the PPM-type phosphatase domain. 4 residues coordinate Mn(2+): aspartate 58, glycine 59, aspartate 254, and aspartate 296. The disordered stretch occupies residues 311-340 (DPDEVASARDEHQHNPEGGDEKLDINNDND). The span at 316 to 340 (ASARDEHQHNPEGGDEKLDINNDND) shows a compositional bias: basic and acidic residues.

The protein belongs to the PP2C family. Requires Mg(2+) as cofactor. It depends on Mn(2+) as a cofactor.

The enzyme catalyses O-phospho-L-seryl-[protein] + H2O = L-seryl-[protein] + phosphate. It catalyses the reaction O-phospho-L-threonyl-[protein] + H2O = L-threonyl-[protein] + phosphate. In Oryza sativa subsp. japonica (Rice), this protein is Probable protein phosphatase 2C 21.